The primary structure comprises 2120 residues: Alpha-tectorin (2120 aa).

The signal sequence occupies residues 1–24 (MNTRSLLSAWAALLVVTVRHRAHA). N-linked (GlcNAc...) asparagine glycosylation is found at N34, N215, N258, N277, N445, and N496. An NIDO domain is found at 98–252 (PFCGDVANGI…GRWAFKIDGR (155 aa)). Residues 260–312 (SLRGQFLHQGEIFWENSNCSTKCRCLDFNNEIFCQEMLAPFETVEPKIKFFQC) enclose the VWFC domain. The region spanning 317 to 490 (TACVVFGDPH…RVPHPERKCS (174 aa)) is the VWFD 1 domain. Disulfide bonds link C319-C451 and C341-C489. The region spanning 578-620 (PGHSHYSGCASGCPATCSDLTAPLRCTAPCPEGCECDDGHVLS) is the TIL 1 domain. Residues N666, N792, N822, N834, N877, N899, N907, and N928 are each glycosylated (N-linked (GlcNAc...) asparagine). A VWFD 2 domain is found at 690–865 (GLCSVGQNQV…SWTTFDEICN (176 aa)). Residues C692 and C828 are joined by a disulfide bond. One can recognise a TIL 2 domain in the interval 963–1013 (CPENSHFEECMSCVETCETLATGCCMDTCTEGCQCDEGFALRSPCVPRGEC). 4 N-linked (GlcNAc...) asparagine glycosylation sites follow: N1025, N1041, N1207, and N1337. A VWFD 3 domain is found at 1066-1250 (ASCIVSGYGH…SWAKRDTFCR (185 aa)). 2 disulfides stabilise this stretch: C1068/C1213 and C1090/C1249. The TIL 3 domain maps to 1345–1398 (CPPNSHYESCVSLCQPRCAAIRLKSDCGHYCVEGCQCDPGYVLNGKSCILPQNC). A VWFD 4 domain is found at 1458–1633 (SFCLAAGGGV…KTNGMQKSCN (176 aa)). 7 cysteine pairs are disulfide-bonded: C1460-C1594, C1482-C1632, C1684-C1742, C1708-C1751, C1753-C1785, C1773-C1865, and C1804-C1824. N1511, N1537, N1723, N1739, N1761, N1818, N1831, N1847, N1887, and N1906 each carry an N-linked (GlcNAc...) asparagine glycan. Residues 1772-2026 (TCKAAQMEVS…YSCKINCPQH (255 aa)) enclose the ZP domain. 3 cysteine pairs are disulfide-bonded: C1947/C2007, C1968/C2023, and C2012/C2019. A lipid anchor (GPI-anchor amidated asparagine) is attached at N2058. Residues 2059 to 2120 (GGCEQICTSQ…LWAALHDPTS (62 aa)) constitute a propeptide, removed in mature form.

As to quaternary structure, may form homomeric filament after self-association or heteromeric filament after association with beta-tectorin. Post-translationally, at least 3 products of tectorin seem to exist: HMM, MMM and LMM. They may be generated by active processing or the result of proteolysis occurring between intrachain disulfide bonds. In terms of processing, the presence of a hydrophobic C-terminus preceded by a potential cleavage site strongly suggests that tectorins are synthesized as glycosylphosphatidylinositol-linked, membrane-bound precursors. Tectorins are targeted to the apical surface of the inner ear epithelia by the lipid and proteolytically released into the extracellular compartment. In terms of tissue distribution, expressed in the inner ear.

The protein resides in the cell membrane. It localises to the secreted. The protein localises to the extracellular space. It is found in the extracellular matrix. In terms of biological role, one of the major non-collagenous components of the tectorial membrane. The tectorial membrane is an extracellular matrix of the inner ear that covers the neuroepithelium of the cochlea and contacts the stereocilia bundles of specialized sensory hair cells. Sound induces movement of these hair cells relative to the tectorial membrane, deflects the stereocilia and leads to fluctuations in hair-cell membrane potential, transducing sound into electrical signals. This Gallus gallus (Chicken) protein is Alpha-tectorin (TECTA).